The primary structure comprises 365 residues: PR domain zinc finger protein 12 (365 aa).

Residues 86 to 203 (VEVIIAQSSI…PDQELLVWYG (118 aa)) enclose the SET domain. 3 consecutive C2H2-type zinc fingers follow at residues 243–265 (MRCV…MRIH), 271–293 (FVCR…VRLH), and 299–323 (YKCQ…SARH). The tract at residues 318-338 (QKSARHRPPSTALQAHSPALP) is disordered. Positions 329 to 338 (ALQAHSPALP) are enriched in low complexity.

It belongs to the class V-like SAM-binding methyltransferase superfamily. In terms of assembly, interacts with EHMT2.

Its subcellular location is the nucleus. Functionally, transcriptional regulator necessary for the development of nociceptive neurons, playing a key role in determining the nociceptive lineage from neural crest cell progenitors. Initiates neurogenesis and activates downstream pro-neuronal transcription factors, such as NEUROD1, BRN3A, and ISL1, specifically within nociceptive neurons, while repressing non-nociceptor cell fates. Essential for the proper function of nociceptors in adults, influencing both their excitability and their gene expression, thereby impacting how these neurons respond to various pain stimuli. The protein is PR domain zinc finger protein 12 (Prdm12) of Mus musculus (Mouse).